The primary structure comprises 526 residues: Na(+)/H(+) antiporter NhaB (526 aa).

12 consecutive transmembrane segments (helical) span residues 25–45, 52–72, 89–109, 130–164, 204–224, 242–262, 305–325, 350–370, 391–411, 448–468, 479–499, and 505–525; these read ILLF…AAGW, IFTL…LLAI, LVAN…IYFM, LSLA…FYAI, LMMH…VGEP, IRMA…CILV, AVIA…VGLI, QEAL…AVII, LALF…VFVG, VATP…LAPL, MALP…ELLL, and WFYQ…LPAL.

It belongs to the NhaB Na(+)/H(+) (TC 2.A.34) antiporter family.

It localises to the cell inner membrane. It catalyses the reaction 2 Na(+)(in) + 3 H(+)(out) = 2 Na(+)(out) + 3 H(+)(in). Functionally, na(+)/H(+) antiporter that extrudes sodium in exchange for external protons. This Aeromonas salmonicida (strain A449) protein is Na(+)/H(+) antiporter NhaB.